We begin with the raw amino-acid sequence, 212 residues long: Uridine kinase (212 aa).

13–20 (GASASGKS) lines the ATP pocket.

This sequence belongs to the uridine kinase family.

It is found in the cytoplasm. It catalyses the reaction uridine + ATP = UMP + ADP + H(+). The catalysed reaction is cytidine + ATP = CMP + ADP + H(+). It participates in pyrimidine metabolism; CTP biosynthesis via salvage pathway; CTP from cytidine: step 1/3. The protein operates within pyrimidine metabolism; UMP biosynthesis via salvage pathway; UMP from uridine: step 1/1. The sequence is that of Uridine kinase from Shewanella frigidimarina (strain NCIMB 400).